Reading from the N-terminus, the 505-residue chain is DNA primase DnaG (505 aa).

Residues 167-241 (DAVIVVEGRA…DVDYVAFAPP (75 aa)) form the Toprim domain. Residues Glu-173, Asp-215, and Asp-217 each coordinate Mg(2+). Positions 268–410 (DEPNLREAAT…PLDNEPRSIE (143 aa)) are disordered. Low complexity predominate over residues 318-327 (AGVVAGGARS). Composition is skewed to acidic residues over residues 349 to 376 (GEVD…DAEF) and 384 to 402 (PNLD…DAPL).

This sequence belongs to the archaeal DnaG primase family. In terms of assembly, forms a ternary complex with MCM helicase and DNA. Mg(2+) serves as cofactor.

It carries out the reaction ssDNA + n NTP = ssDNA/pppN(pN)n-1 hybrid + (n-1) diphosphate.. Functionally, RNA polymerase that catalyzes the synthesis of short RNA molecules used as primers for DNA polymerase during DNA replication. The sequence is that of DNA primase DnaG from Halorubrum lacusprofundi (strain ATCC 49239 / DSM 5036 / JCM 8891 / ACAM 34).